The chain runs to 439 residues: GlutamylGlutaminyl-tRNA synthetase (439 aa).

The 'HIGH' region signature appears at 6–16 (PSPTGDMHIGN). The 'KMSKS' region motif lies at 232–236 (KMSKR). Position 235 (K235) interacts with ATP.

It belongs to the class-I aminoacyl-tRNA synthetase family. Glutamate--tRNA ligase type 1 subfamily. As to quaternary structure, monomer.

The protein localises to the cytoplasm. The catalysed reaction is tRNA(Glu) + L-glutamate + ATP = L-glutamyl-tRNA(Gln) + AMP + diphosphate. In terms of biological role, aminoacylates tRNA(Gln) with glutamate. Does not aminoacylate tRNA(Glu). The protein is GlutamylGlutaminyl-tRNA synthetase (gltX2) of Helicobacter pylori (strain ATCC 700392 / 26695) (Campylobacter pylori).